Consider the following 20-residue polypeptide: Disintegrin (20 aa).

Residues 1-20 (EAGEECDCGTPENPCCDAAT) enclose the Disintegrin domain. 2 cysteine pairs are disulfide-bonded: Cys6–Cys15 and Cys8–Cys16.

It belongs to the venom metalloproteinase (M12B) family. P-II subfamily. P-IIa sub-subfamily. As to quaternary structure, monomer. As to expression, expressed by the venom gland.

It localises to the secreted. Its function is as follows. Inhibits fibrinogen interaction with platelets. Acts by binding to alpha-IIb/beta-3 (ITGA2B/ITGB3) on the platelet surface and inhibits aggregation induced by ADP, thrombin, platelet-activating factor and collagen. The sequence is that of Disintegrin from Bothrops fonsecai (Fonseca's lancehead).